A 207-amino-acid polypeptide reads, in one-letter code: Cytochrome c biogenesis ATP-binding export protein CcmA (207 aa).

The ABC transporter domain maps to 4 to 207 (LEARELLCER…RISLTQTRAA (204 aa)). 36–43 (GSNGAGKT) lines the ATP pocket.

It belongs to the ABC transporter superfamily. CcmA exporter (TC 3.A.1.107) family. The complex is composed of two ATP-binding proteins (CcmA) and two transmembrane proteins (CcmB).

It is found in the cell inner membrane. It carries out the reaction heme b(in) + ATP + H2O = heme b(out) + ADP + phosphate + H(+). Functionally, part of the ABC transporter complex CcmAB involved in the biogenesis of c-type cytochromes; once thought to export heme, this seems not to be the case, but its exact role is uncertain. Responsible for energy coupling to the transport system. The polypeptide is Cytochrome c biogenesis ATP-binding export protein CcmA (Shigella flexneri).